Consider the following 381-residue polypeptide: Subtilisin J (381 aa).

A signal peptide spans 1–29; sequence MRSKKLWISLLFALTLIFTMAFSNMSVQA. A propeptide spanning residues 30–106 is cleaved from the precursor; that stretch reads AGKSSTEKKY…VEEDHIAHEY (77 aa). In terms of domain architecture, Inhibitor I9 spans 38–103; it reads KYIVGFKQTM…VAYVEEDHIA (66 aa). Gln108 provides a ligand contact to Ca(2+). Residues 111–380 form the Peptidase S8 domain; the sequence is PYGISQIKAP…KGLINVQAAA (270 aa). The active-site Charge relay system is Asp138. Asp147 is a Ca(2+) binding site. The active-site Charge relay system is His170. The Ca(2+) site is built by Leu181, Asn183, Ile185, Val187, Ala275, Tyr277, and Thr280. Ser327 (charge relay system) is an active-site residue.

It belongs to the peptidase S8 family. Ca(2+) serves as cofactor.

Its subcellular location is the secreted. The enzyme catalyses Hydrolysis of proteins with broad specificity for peptide bonds, and a preference for a large uncharged residue in P1. Hydrolyzes peptide amides.. Subtilisin is an extracellular alkaline serine protease, it catalyzes the hydrolysis of proteins and peptide amides. The protein is Subtilisin J (aprJ) of Geobacillus stearothermophilus (Bacillus stearothermophilus).